A 141-amino-acid chain; its full sequence is Hemoglobin subunit alpha-A/A' (141 aa).

One can recognise a Globin domain in the interval Val1–Arg141. His58 is an O2 binding site. Heme b is bound at residue His87.

The protein belongs to the globin family. In terms of assembly, heterotetramer of two alpha chains and two beta chains. In terms of tissue distribution, red blood cells.

In terms of biological role, involved in oxygen transport from the lung to the various peripheral tissues. The polypeptide is Hemoglobin subunit alpha-A/A' (HBAA) (Gyps rueppelli (Rueppell's griffon)).